We begin with the raw amino-acid sequence, 60 residues long: Large ribosomal subunit protein bL32 (60 aa).

Basic residues predominate over residues 1 to 20 (MAKPARHTSKAKRNKRRTHY). Residues 1–22 (MAKPARHTSKAKRNKRRTHYKL) are disordered.

It belongs to the bacterial ribosomal protein bL32 family.

The protein is Large ribosomal subunit protein bL32 of Streptococcus agalactiae serotype V (strain ATCC BAA-611 / 2603 V/R).